A 179-amino-acid polypeptide reads, in one-letter code: ATP synthase subunit delta (179 aa).

It belongs to the ATPase delta chain family. In terms of assembly, F-type ATPases have 2 components, F(1) - the catalytic core - and F(0) - the membrane proton channel. F(1) has five subunits: alpha(3), beta(3), gamma(1), delta(1), epsilon(1). F(0) has three main subunits: a(1), b(2) and c(10-14). The alpha and beta chains form an alternating ring which encloses part of the gamma chain. F(1) is attached to F(0) by a central stalk formed by the gamma and epsilon chains, while a peripheral stalk is formed by the delta and b chains.

The protein resides in the cell membrane. Functionally, f(1)F(0) ATP synthase produces ATP from ADP in the presence of a proton or sodium gradient. F-type ATPases consist of two structural domains, F(1) containing the extramembraneous catalytic core and F(0) containing the membrane proton channel, linked together by a central stalk and a peripheral stalk. During catalysis, ATP synthesis in the catalytic domain of F(1) is coupled via a rotary mechanism of the central stalk subunits to proton translocation. In terms of biological role, this protein is part of the stalk that links CF(0) to CF(1). It either transmits conformational changes from CF(0) to CF(1) or is implicated in proton conduction. The polypeptide is ATP synthase subunit delta (Mycoplasmopsis pulmonis (strain UAB CTIP) (Mycoplasma pulmonis)).